The primary structure comprises 404 residues: Cysteine desulfurase IscS (404 aa).

Pyridoxal 5'-phosphate contacts are provided by residues 75 to 76 (AT), asparagine 155, glutamine 183, and 203 to 205 (SAH). Lysine 206 is subject to N6-(pyridoxal phosphate)lysine. A pyridoxal 5'-phosphate-binding site is contributed by threonine 243. The active-site Cysteine persulfide intermediate is the cysteine 328. Cysteine 328 serves as a coordination point for [2Fe-2S] cluster.

This sequence belongs to the class-V pyridoxal-phosphate-dependent aminotransferase family. NifS/IscS subfamily. As to quaternary structure, homodimer. Forms a heterotetramer with IscU, interacts with other sulfur acceptors. Pyridoxal 5'-phosphate is required as a cofactor.

Its subcellular location is the cytoplasm. It catalyses the reaction (sulfur carrier)-H + L-cysteine = (sulfur carrier)-SH + L-alanine. It participates in cofactor biosynthesis; iron-sulfur cluster biosynthesis. Its function is as follows. Master enzyme that delivers sulfur to a number of partners involved in Fe-S cluster assembly, tRNA modification or cofactor biosynthesis. Catalyzes the removal of elemental sulfur atoms from cysteine to produce alanine. Functions as a sulfur delivery protein for Fe-S cluster synthesis onto IscU, an Fe-S scaffold assembly protein, as well as other S acceptor proteins. The protein is Cysteine desulfurase IscS of Buchnera aphidicola subsp. Acyrthosiphon pisum (strain 5A).